A 379-amino-acid chain; its full sequence is Dual-specificity RNA methyltransferase RlmN (379 aa).

Catalysis depends on Glu-96, which acts as the Proton acceptor. The Radical SAM core domain occupies 102–342 (TDDRGTLCVS…TRTTRGDDID (241 aa)). Cys-109 and Cys-345 form a disulfide bridge. Residues Cys-116, Cys-120, and Cys-123 each coordinate [4Fe-4S] cluster. S-adenosyl-L-methionine is bound by residues 170-171 (GE), Ser-202, 224-226 (SLH), and Asn-302. The S-methylcysteine intermediate role is filled by Cys-345.

The protein belongs to the radical SAM superfamily. RlmN family. Requires [4Fe-4S] cluster as cofactor.

Its subcellular location is the cytoplasm. The catalysed reaction is adenosine(2503) in 23S rRNA + 2 reduced [2Fe-2S]-[ferredoxin] + 2 S-adenosyl-L-methionine = 2-methyladenosine(2503) in 23S rRNA + 5'-deoxyadenosine + L-methionine + 2 oxidized [2Fe-2S]-[ferredoxin] + S-adenosyl-L-homocysteine. The enzyme catalyses adenosine(37) in tRNA + 2 reduced [2Fe-2S]-[ferredoxin] + 2 S-adenosyl-L-methionine = 2-methyladenosine(37) in tRNA + 5'-deoxyadenosine + L-methionine + 2 oxidized [2Fe-2S]-[ferredoxin] + S-adenosyl-L-homocysteine. Specifically methylates position 2 of adenine 2503 in 23S rRNA and position 2 of adenine 37 in tRNAs. m2A2503 modification seems to play a crucial role in the proofreading step occurring at the peptidyl transferase center and thus would serve to optimize ribosomal fidelity. In Pseudomonas entomophila (strain L48), this protein is Dual-specificity RNA methyltransferase RlmN.